A 186-amino-acid polypeptide reads, in one-letter code: ATP synthase subunit delta (186 aa).

Belongs to the ATPase delta chain family. F-type ATPases have 2 components, F(1) - the catalytic core - and F(0) - the membrane proton channel. F(1) has five subunits: alpha(3), beta(3), gamma(1), delta(1), epsilon(1). CF(0) has four main subunits: a(1), b(1), b'(1) and c(10-14). The alpha and beta chains form an alternating ring which encloses part of the gamma chain. F(1) is attached to F(0) by a central stalk formed by the gamma and epsilon chains, while a peripheral stalk is formed by the delta, b and b' chains.

Its subcellular location is the cell inner membrane. Functionally, f(1)F(0) ATP synthase produces ATP from ADP in the presence of a proton or sodium gradient. F-type ATPases consist of two structural domains, F(1) containing the extramembraneous catalytic core and F(0) containing the membrane proton channel, linked together by a central stalk and a peripheral stalk. During catalysis, ATP synthesis in the catalytic domain of F(1) is coupled via a rotary mechanism of the central stalk subunits to proton translocation. Its function is as follows. This protein is part of the stalk that links CF(0) to CF(1). It either transmits conformational changes from CF(0) to CF(1) or is implicated in proton conduction. The chain is ATP synthase subunit delta from Rhodospirillum centenum (strain ATCC 51521 / SW).